The primary structure comprises 541 residues: T-complex protein 1 subunit epsilon (541 aa).

Alanine 2 is subject to N-acetylalanine. A Glycyl lysine isopeptide (Lys-Gly) (interchain with G-Cter in SUMO2) cross-link involves residue lysine 20. Phosphoserine is present on serine 26. Glycine 53 is an ADP binding site. Residue glycine 53 coordinates ATP. Aspartate 104 lines the Mg(2+) pocket. ADP is bound by residues glycine 105, threonine 106, threonine 107, and serine 175. Positions 106 and 107 each coordinate ATP. Glycyl lysine isopeptide (Lys-Gly) (interchain with G-Cter in SUMO2) cross-links involve residues lysine 210, lysine 214, lysine 265, lysine 275, and lysine 279. Serine 346 bears the Phosphoserine mark. A Glycyl lysine isopeptide (Lys-Gly) (interchain with G-Cter in SUMO2) cross-link involves residue lysine 392. Residues glycine 422, aspartate 492, glutamate 508, and lysine 513 each coordinate ADP. Residue glycine 422 participates in ATP binding. A Phosphoserine modification is found at serine 539.

The protein belongs to the TCP-1 chaperonin family. Component of the chaperonin-containing T-complex (TRiC), a hexadecamer composed of two identical back-to-back stacked rings enclosing a protein folding chamber. Each ring is made up of eight different subunits: TCP1/CCT1, CCT2, CCT3, CCT4, CCT5, CCT6A/CCT6, CCT7, CCT8. Interacts with PACRG. Interacts with DNAAF4. Interacts with DLEC1. Interacts with SPMAP2. Post-translationally, ubiquitinated by the DCX(DCAF12) complex specifically recognizes the diglutamate (Glu-Glu) at the C-terminus, leading to its degradation.

The protein localises to the cytoplasm. The protein resides in the cytoskeleton. Its subcellular location is the microtubule organizing center. It localises to the centrosome. It carries out the reaction ATP + H2O = ADP + phosphate + H(+). In terms of biological role, component of the chaperonin-containing T-complex (TRiC), a molecular chaperone complex that assists the folding of actin, tubulin and other proteins upon ATP hydrolysis. The TRiC complex mediates the folding of WRAP53/TCAB1, thereby regulating telomere maintenance. As part of the TRiC complex may play a role in the assembly of BBSome, a complex involved in ciliogenesis regulating transports vesicles to the cilia. The sequence is that of T-complex protein 1 subunit epsilon (Cct5) from Rattus norvegicus (Rat).